Here is a 909-residue protein sequence, read N- to C-terminus: Protein translocase subunit SecA (909 aa).

ATP contacts are provided by residues Gln-87, 105–109 (GEGKT), and Asp-513. Positions 834-909 (QEEVERMEEQ…KYKQCHGKID (76 aa)) are disordered. Over residues 836 to 853 (EVERMEEQRRAQAEEAAR) the composition is skewed to basic and acidic residues. Low complexity predominate over residues 854 to 863 (RAQAQHAAAQ). A compositionally biased stretch (basic and acidic residues) spans 874–889 (EGAHQPMVREERKVGR). Zn(2+) is bound by residues Cys-893, Cys-895, Cys-904, and His-905. Over residues 899 to 909 (KKYKQCHGKID) the composition is skewed to basic residues.

It belongs to the SecA family. As to quaternary structure, monomer and homodimer. Part of the essential Sec protein translocation apparatus which comprises SecA, SecYEG and auxiliary proteins SecDF-YajC and YidC. Requires Zn(2+) as cofactor.

Its subcellular location is the cell inner membrane. The protein resides in the cytoplasm. The enzyme catalyses ATP + H2O + cellular proteinSide 1 = ADP + phosphate + cellular proteinSide 2.. In terms of biological role, part of the Sec protein translocase complex. Interacts with the SecYEG preprotein conducting channel. Has a central role in coupling the hydrolysis of ATP to the transfer of proteins into and across the cell membrane, serving both as a receptor for the preprotein-SecB complex and as an ATP-driven molecular motor driving the stepwise translocation of polypeptide chains across the membrane. This Vibrio campbellii (strain ATCC BAA-1116) protein is Protein translocase subunit SecA.